A 306-amino-acid polypeptide reads, in one-letter code: Agmatinase (306 aa).

Mn(2+) contacts are provided by histidine 126, aspartate 149, histidine 151, aspartate 153, aspartate 230, and aspartate 232.

This sequence belongs to the arginase family. Agmatinase subfamily. Requires Mn(2+) as cofactor.

The catalysed reaction is agmatine + H2O = urea + putrescine. It participates in amine and polyamine biosynthesis; putrescine biosynthesis via agmatine pathway; putrescine from agmatine: step 1/1. Its function is as follows. Catalyzes the formation of putrescine from agmatine. The protein is Agmatinase of Escherichia coli O1:K1 / APEC.